The following is a 113-amino-acid chain: uncharacterized protein (113 aa).

In terms of domain architecture, HTH hxlR-type spans 16 to 113 (TPFGYTLSLI…CEWGVKNQNN (98 aa)).

This is an uncharacterized protein from Halalkalibacterium halodurans (strain ATCC BAA-125 / DSM 18197 / FERM 7344 / JCM 9153 / C-125) (Bacillus halodurans).